A 595-amino-acid chain; its full sequence is uncharacterized protein (595 aa).

Transmembrane regions (helical) follow at residues 64–84 (VVFL…LIVF), 86–106 (IFYA…IGVL), 239–259 (FYVI…PVAS), 281–301 (FYLW…GILP), 334–354 (VHFI…LFFI), 368–388 (MFGI…HFII), 504–524 (FIYV…SYIM), 547–567 (YLFQ…GILT), and 571–591 (IIAG…LFKF).

The protein to M.jannaschii FlaJ.

The protein localises to the cell membrane. This is an uncharacterized protein from Methanocaldococcus jannaschii (strain ATCC 43067 / DSM 2661 / JAL-1 / JCM 10045 / NBRC 100440) (Methanococcus jannaschii).